The chain runs to 997 residues: Phosphoenolpyruvate carboxylase (997 aa).

Residues 1–67 (MKSSGSARTA…KPAARTREDK (67 aa)) form a disordered region. Residues His207 and Lys649 contribute to the active site.

The protein belongs to the PEPCase type 1 family. Mg(2+) serves as cofactor.

It catalyses the reaction oxaloacetate + phosphate = phosphoenolpyruvate + hydrogencarbonate. Forms oxaloacetate, a four-carbon dicarboxylic acid source for the tricarboxylic acid cycle. The chain is Phosphoenolpyruvate carboxylase from Burkholderia vietnamiensis (strain G4 / LMG 22486) (Burkholderia cepacia (strain R1808)).